A 439-amino-acid polypeptide reads, in one-letter code: 3-phosphoshikimate 1-carboxyvinyltransferase (439 aa).

Residues K29 and R34 each coordinate 3-phosphoshikimate. K29 contributes to the phosphoenolpyruvate binding site. Residues G99 and R128 each coordinate phosphoenolpyruvate. S171, S172, Q173, S199, D316, and K343 together coordinate 3-phosphoshikimate. Position 173 (Q173) interacts with phosphoenolpyruvate. D316 functions as the Proton acceptor in the catalytic mechanism. Residues R347, R390, and K416 each coordinate phosphoenolpyruvate.

It belongs to the EPSP synthase family. As to quaternary structure, monomer.

It is found in the cytoplasm. It catalyses the reaction 3-phosphoshikimate + phosphoenolpyruvate = 5-O-(1-carboxyvinyl)-3-phosphoshikimate + phosphate. The protein operates within metabolic intermediate biosynthesis; chorismate biosynthesis; chorismate from D-erythrose 4-phosphate and phosphoenolpyruvate: step 6/7. Functionally, catalyzes the transfer of the enolpyruvyl moiety of phosphoenolpyruvate (PEP) to the 5-hydroxyl of shikimate-3-phosphate (S3P) to produce enolpyruvyl shikimate-3-phosphate and inorganic phosphate. This is 3-phosphoshikimate 1-carboxyvinyltransferase from Deinococcus radiodurans (strain ATCC 13939 / DSM 20539 / JCM 16871 / CCUG 27074 / LMG 4051 / NBRC 15346 / NCIMB 9279 / VKM B-1422 / R1).